Here is a 209-residue protein sequence, read N- to C-terminus: Large ribosomal subunit protein bL25 (209 aa).

2 disordered regions span residues 1–20 and 190–209; these read MSKS…KGSS and LDVS…TQTS. Basic and acidic residues predominate over residues 8-20; sequence KAEKRERVGKGSS. The span at 192–209 shows a compositional bias: acidic residues; the sequence is VSDETSEQEKDEGETQTS.

The protein belongs to the bacterial ribosomal protein bL25 family. CTC subfamily. In terms of assembly, part of the 50S ribosomal subunit; part of the 5S rRNA/L5/L18/L25 subcomplex. Contacts the 5S rRNA. Binds to the 5S rRNA independently of L5 and L18.

Functionally, this is one of the proteins that binds to the 5S RNA in the ribosome where it forms part of the central protuberance. The sequence is that of Large ribosomal subunit protein bL25 from Bartonella tribocorum (strain CIP 105476 / IBS 506).